The chain runs to 451 residues: uncharacterized protein (451 aa).

Residues 1-59 (MLHKNDIIETEISDISHEGMGIAKVDGFVFFVENALPGEIIKMRVLKLRKRIGYGKVEE) enclose the TRAM domain. S-adenosyl-L-methionine contacts are provided by Q283, Y312, E333, and D381. Catalysis depends on C408, which acts as the Nucleophile.

It belongs to the class I-like SAM-binding methyltransferase superfamily. RNA M5U methyltransferase family.

This is an uncharacterized protein from Streptococcus agalactiae serotype V (strain ATCC BAA-611 / 2603 V/R).